The primary structure comprises 581 residues: Interleukin-22 receptor subunit alpha-1 (581 aa).

A signal peptide spans 1–15; sequence MRTLLTILAAGSLLA. Residues 16 to 228 are Extracellular-facing; the sequence is HITEDTSDLL…VKTLPDRTWT (213 aa). 2 consecutive Fibronectin type-III domains span residues 18–115 and 141–221; these read TEDT…RFSS and PTYT…RVKT. Cysteine 71 and cysteine 79 are disulfide-bonded. Asparagine 80 is a glycosylation site (N-linked (GlcNAc...) asparagine). A disulfide bond links cysteine 128 and cysteine 217. The chain crosses the membrane as a helical span at residues 229–249; it reads YSFSGAFLFSLGFLVAGLCYL. Over 250-581 the chain is Cytoplasmic; sequence SYRYITKPPP…GLALTVQWES (332 aa). Disordered regions lie at residues 354–493 and 539–563; these read QAAP…SSLK and PSDE…LESP. The segment covering 378 to 389 has biased composition (polar residues); sequence TPQAVSETQLPS. Residues serine 410 and serine 414 each carry the phosphoserine modification. The segment covering 440 to 449 has biased composition (polar residues); the sequence is CSPTGLSLQE.

It belongs to the type II cytokine receptor family. As to quaternary structure, heterodimer with IL10RB and with IL20RB. Interacts with FBXW12; the interaction promotes ubiquitination of IL22RA1. Ubiquitinated.

It is found in the cell membrane. In terms of biological role, component of the receptor for IL20, IL22 and IL24. Component of IL22 receptor formed by IL22RA1 and IL10RB enabling IL22 signaling via JAK/STAT pathways. IL22 also induces activation of MAPK1/MAPK3 and Akt kinases pathways. Component of one of the receptor for IL20 and IL24 formed by IL22RA1 and IL20RB also signaling through STATs activation. Mediates IL24 antiangiogenic activity as well as IL24 inhibitory effect on endothelial cell tube formation and differentiation. The polypeptide is Interleukin-22 receptor subunit alpha-1 (IL22RA1) (Bos taurus (Bovine)).